The chain runs to 191 residues: UPF0228 protein MM_1428 (191 aa).

It belongs to the UPF0228 family.

The chain is UPF0228 protein MM_1428 from Methanosarcina mazei (strain ATCC BAA-159 / DSM 3647 / Goe1 / Go1 / JCM 11833 / OCM 88) (Methanosarcina frisia).